A 206-amino-acid polypeptide reads, in one-letter code: Holliday junction branch migration complex subunit RuvA (206 aa).

The segment at 1-67 (MIASIFGKIT…QILEEGFAFN (67 aa)) is domain I. The domain II stretch occupies residues 68-141 (TLEEKEWFSK…YDRDDGGKRI (74 aa)). The segment at 141 to 145 (IKPNT) is flexible linker. The tract at residues 146-206 (AMANDYDEMF…QNNEVTNKTA (61 aa)) is domain III.

This sequence belongs to the RuvA family. Homotetramer. Forms an RuvA(8)-RuvB(12)-Holliday junction (HJ) complex. HJ DNA is sandwiched between 2 RuvA tetramers; dsDNA enters through RuvA and exits via RuvB. An RuvB hexamer assembles on each DNA strand where it exits the tetramer. Each RuvB hexamer is contacted by two RuvA subunits (via domain III) on 2 adjacent RuvB subunits; this complex drives branch migration. In the full resolvosome a probable DNA-RuvA(4)-RuvB(12)-RuvC(2) complex forms which resolves the HJ.

The protein localises to the cytoplasm. Functionally, the RuvA-RuvB-RuvC complex processes Holliday junction (HJ) DNA during genetic recombination and DNA repair, while the RuvA-RuvB complex plays an important role in the rescue of blocked DNA replication forks via replication fork reversal (RFR). RuvA specifically binds to HJ cruciform DNA, conferring on it an open structure. The RuvB hexamer acts as an ATP-dependent pump, pulling dsDNA into and through the RuvAB complex. HJ branch migration allows RuvC to scan DNA until it finds its consensus sequence, where it cleaves and resolves the cruciform DNA. The polypeptide is Holliday junction branch migration complex subunit RuvA (Mycoplasma pneumoniae (strain ATCC 29342 / M129 / Subtype 1) (Mycoplasmoides pneumoniae)).